Reading from the N-terminus, the 120-residue chain is uncharacterized protein (120 aa).

The protein localises to the cytoplasm. The protein resides in the nucleus. This is an uncharacterized protein from Schizosaccharomyces pombe (strain 972 / ATCC 24843) (Fission yeast).